A 424-amino-acid chain; its full sequence is MNWPVRVLVVDDSAFSRRLVTDILQADPDIQVVGYARNGREALEKVASLQPRVVTLDQEMPVMDGLTTLTALMAGNPVAVIMLSSHTAAGAAVTIKALELGAVDFIPKPAPGDSLDDFTRQLTEKVKAAARVPVTRLCRGKNCRENTPAPFISPRPGREEAVAAVTGSAAATAAIGSRLSPGRSPGGKEGVAGAVSAGSTRGEAIRPGKGTPAAIKGAVAAGAGRLPGRRPGIEVVAIGTSTGGPAALRQVLTALPGNLPAGIVIVQHMPAGFTGPLARRLDELAALEVREAAAGDILRPGLALLAPAGRQMLLERHGDAVQVHLAAEAGITTLFKPSVDALFLTVAREYGPRSLGVILTGMGNDGLRGLRAIKEQGGTVIAQDEATSVVYGMPRAAVEAGLADLVLPLEDIAPAIVALVTGAG.

The 118-residue stretch at Arg-6–Thr-123 folds into the Response regulatory domain. The residue at position 57 (Asp-57) is a 4-aspartylphosphate. Residues Ser-177–Gly-210 are disordered. The CheB-type methylesterase domain maps to Arg-229 to Ala-423. Catalysis depends on residues Ser-241, His-268, and Asp-365.

The protein belongs to the CheB family. Phosphorylated by CheA. Phosphorylation of the N-terminal regulatory domain activates the methylesterase activity.

It localises to the cytoplasm. It catalyses the reaction [protein]-L-glutamate 5-O-methyl ester + H2O = L-glutamyl-[protein] + methanol + H(+). The enzyme catalyses L-glutaminyl-[protein] + H2O = L-glutamyl-[protein] + NH4(+). In terms of biological role, involved in chemotaxis. Part of a chemotaxis signal transduction system that modulates chemotaxis in response to various stimuli. Catalyzes the demethylation of specific methylglutamate residues introduced into the chemoreceptors (methyl-accepting chemotaxis proteins or MCP) by CheR. Also mediates the irreversible deamidation of specific glutamine residues to glutamic acid. In Moorella thermoacetica (strain ATCC 39073 / JCM 9320), this protein is Protein-glutamate methylesterase/protein-glutamine glutaminase.